Reading from the N-terminus, the 1126-residue chain is Carbamoyl phosphate synthase large chain (1126 aa).

Residues 1-402 form a carboxyphosphate synthetic domain region; the sequence is MPKRTDIKSV…SLGKAMRSID (402 aa). ATP contacts are provided by arginine 129, arginine 169, glycine 175, glycine 176, glutamate 208, isoleucine 210, glutamate 215, glycine 241, valine 242, histidine 243, glutamine 285, and glutamate 299. The ATP-grasp 1 domain maps to 133–328; that stretch reads KKVVEEAGAE…IAKIATKLAL (196 aa). Glutamine 285, glutamate 299, and asparagine 301 together coordinate Mg(2+). Mn(2+) contacts are provided by glutamine 285, glutamate 299, and asparagine 301. An oligomerization domain region spans residues 403 to 551; the sequence is KRHMGFNWDG…YYYSCYADET (149 aa). Residues 552 to 962 form a carbamoyl phosphate synthetic domain region; the sequence is ELRPRDREAV…AFAKSQLAAY (411 aa). In terms of domain architecture, ATP-grasp 2 spans 681–881; that stretch reads GEVLKKADMN…LAKAAARIMV (201 aa). 10 residues coordinate ATP: arginine 717, lysine 765, leucine 767, glutamate 772, glycine 797, valine 798, histidine 799, serine 800, glutamine 840, and glutamate 852. Glutamine 840, glutamate 852, and asparagine 854 together coordinate Mg(2+). 3 residues coordinate Mn(2+): glutamine 840, glutamate 852, and asparagine 854. The allosteric domain stretch occupies residues 963–1126; that stretch reads EGGLPTSGNV…TQLFELESRD (164 aa). An MGS-like domain is found at 964–1126; it reads GGLPTSGNVF…TQLFELESRD (163 aa).

The protein belongs to the CarB family. In terms of assembly, composed of two chains; the small (or glutamine) chain promotes the hydrolysis of glutamine to ammonia, which is used by the large (or ammonia) chain to synthesize carbamoyl phosphate. Tetramer of heterodimers (alpha,beta)4. It depends on Mg(2+) as a cofactor. Requires Mn(2+) as cofactor.

The catalysed reaction is hydrogencarbonate + L-glutamine + 2 ATP + H2O = carbamoyl phosphate + L-glutamate + 2 ADP + phosphate + 2 H(+). The enzyme catalyses hydrogencarbonate + NH4(+) + 2 ATP = carbamoyl phosphate + 2 ADP + phosphate + 2 H(+). It participates in amino-acid biosynthesis; L-arginine biosynthesis; carbamoyl phosphate from bicarbonate: step 1/1. The protein operates within pyrimidine metabolism; UMP biosynthesis via de novo pathway; (S)-dihydroorotate from bicarbonate: step 1/3. Functionally, large subunit of the glutamine-dependent carbamoyl phosphate synthetase (CPSase). CPSase catalyzes the formation of carbamoyl phosphate from the ammonia moiety of glutamine, carbonate, and phosphate donated by ATP, constituting the first step of 2 biosynthetic pathways, one leading to arginine and/or urea and the other to pyrimidine nucleotides. The large subunit (synthetase) binds the substrates ammonia (free or transferred from glutamine from the small subunit), hydrogencarbonate and ATP and carries out an ATP-coupled ligase reaction, activating hydrogencarbonate by forming carboxy phosphate which reacts with ammonia to form carbamoyl phosphate. In Bifidobacterium adolescentis (strain ATCC 15703 / DSM 20083 / NCTC 11814 / E194a), this protein is Carbamoyl phosphate synthase large chain.